The chain runs to 1139 residues: Solute carrier family 12 member 5 (1139 aa).

2 disordered regions span residues 1 to 63 (MSRR…GKEY) and 92 to 116 (TNLP…KPVQ). At 1–98 (MSRRFTVTSL…ANYTNLPQGS (98 aa)) the chain is on the cytoplasmic side. Residues 19-45 (PDPESRRHSVADPRHLPGEDVKGDGNP) show a composition bias toward basic and acidic residues. A compositionally biased stretch (polar residues) spans 46 to 55 (KESSPFINST). Thr57 is subject to Phosphothreonine. Positions 98–111 (SREHEEAENNEGGK) are enriched in basic and acidic residues. A discontinuously helical transmembrane segment spans residues 99 to 120 (REHEEAENNEGGKKKPVQAPRM). Lys113 contributes to the K(+) binding site. The Extracellular portion of the chain corresponds to 121–129 (GTFMGVYLP). Residues 130–151 (CLQNIFGVILFLRLTWVVGIAG) traverse the membrane as a helical segment. Over 152–174 (IMESFCMVFICCSCTMLTAISMS) the chain is Cytoplasmic. Residues 175 to 203 (AIATNGVVPAGGSYYMISRSLGPEFGGAV) form a helical membrane-spanning segment. A chloride-binding site is contributed by Ala184. At 204–229 (GLCFYLGTTFAGAMYILGTIEILLAY) the chain is on the extracellular side. The next 2 membrane-spanning stretches (helical) occupy residues 230-250 (LFPA…AAML) and 251-276 (NNMR…KYVN). At 277–402 (KFALVFLGCV…ERSGMTSVGL (126 aa)) the chain is on the extracellular side. An intrachain disulfide couples Cys310 to Cys325. Asn314, Asn333, Asn351, and Asn362 each carry an N-linked (GlcNAc...) asparagine glycan. A disulfide bond links Cys345 and Cys354. The helical transmembrane segment at 403 to 420 (ADGTPIDMDHPYVFSDMT) threads the bilayer. Met410 contacts K(+). Residues Tyr414 and Val415 each coordinate chloride. The Cytoplasmic portion of the chain corresponds to 421–429 (SYFTLLVGI). The helical transmembrane segment at 430-453 (YFPSVTGIMAGSNRSGDLRDAQKS) threads the bilayer. Asp446 contacts K(+). The Extracellular portion of the chain corresponds to 454-485 (IPTGTILAIATTSAVYISSVVLFGACIEGVVL). Residues 486–513 (RDKFGEAVNGNLVVGTLAWPSPWVIVIG) form a helical membrane-spanning segment. The Cytoplasmic segment spans residues 514-534 (SFFSTCGAGLQSLTGAPRLLQ). 2 helical membrane-spanning segments follow: residues 535–555 (AISR…KANG) and 556–578 (EPTW…ASLD). Residue Glu569 coordinates chloride. Over 579–592 (EVAPILSMFFLMCY) the chain is Cytoplasmic. The next 2 membrane-spanning stretches (helical) occupy residues 593 to 615 (MFVN…PRFR) and 616 to 632 (YYHW…CLAL). Topologically, residues 633-1139 (MFICSWYYAL…GGREVITIYS (507 aa)) are cytoplasmic. Positions 667–681 (GIRGLSLSAARYALL) are scissor helix. Phosphothreonine; by OXSR1 and STK39 is present on Thr929. A disordered region spans residues 942-1052 (MHLTKNERER…GPSPVSSEGI (111 aa)). Residues 945–962 (TKNEREREIQSITDESRG) show a composition bias toward basic and acidic residues. The segment covering 982–994 (TAGDSEEKPEEEV) has biased composition (acidic residues). A compositionally biased stretch (low complexity) spans 1003–1012 (PSCPSSSPSP). Residues 1023–1042 (DPEKVHLTWTKDKSVAEKNK) show a composition bias toward basic and acidic residues. Thr1030 bears the Phosphothreonine; by OXSR1 and STK39 mark. A phosphoserine mark is found at Ser1045, Ser1048, and Ser1049.

Belongs to the SLC12A transporter family. K/Cl co-transporter subfamily. Homodimer; adopts a domain-swap conformation at the scissor helices connecting the transmembrane domain and C-terminal domain. Heterodimer with K-Cl cotransporters SLC12A6 and SLC12A7. Interacts with AP2A1. In terms of processing, phosphorylated at Thr-929 and Thr-1030 by OXSR1/OSR1 and STK39/SPAK downstream of WNK kinases (WNK1, WNK2, WNK3 or WNK4), inhibiting the potassium-chloride cotransport activity. As to expression, brain specific. Detected in neuronal cells.

The protein resides in the cell membrane. The protein localises to the cell projection. Its subcellular location is the dendrite. The enzyme catalyses K(+)(in) + chloride(in) = K(+)(out) + chloride(out). Inhibited following phosphorylation by OXSR1/OSR1 and STK39/SPAK: phosphorylation takes place downstream of WNK kinases (WNK1, WNK2, WNK3 or WNK4) in response to hyperosmotic stress and subsequent cell shrinkage. Mediates electroneutral potassium-chloride cotransport in mature neurons and is required for neuronal Cl(-) homeostasis. As major extruder of intracellular chloride, it establishes the low neuronal Cl(-) levels required for chloride influx after binding of GABA-A and glycine to their receptors, with subsequent hyperpolarization and neuronal inhibition. Involved in the regulation of dendritic spine formation and maturation. This Homo sapiens (Human) protein is Solute carrier family 12 member 5.